The following is a 433-amino-acid chain: DNA polymerase processivity factor (433 aa).

The tract at residues 274–433 is disordered; the sequence is RGDPFDKNYV…VPNTKKQKCG (160 aa). Gly residues-rich tracts occupy residues 289-298, 325-336, and 344-359; these read SRGGGGGGGS, GLGGLGGGGGGG, and GGGGSGTRKMSSGGGG. The span at 360 to 376 shows a compositional bias: basic and acidic residues; that stretch reads GDHDHGLSSKEKYEQHK. Over residues 385–398 the composition is skewed to gly residues; sequence GGSGGGGGGGGGGL. Lys410 is covalently cross-linked (Glycyl lysine isopeptide (Lys-Gly) (interchain with G-Cter in host SUMO1)). Residues Ser413, Ser415, and Ser418 each carry the phosphoserine modification.

The protein belongs to the herpesviridae polymerase accessory protein family. In terms of assembly, forms homodimers. Interacts with host SMARCB1. Interacts with host NCL/nucleolin; this interaction is important for the organization of proteins within viral replication compartments. Interacts with UL112/UL113; this interaction is necessary for efficient viral DNA replication. Interacts with UL84. Interacts with the uracil DNA glycosylase UL114. Interacts with the DNA polymerase catalytic subunit UL54. Interacts with host IRF3. Interacts with host RELA. In terms of processing, phosphorylated by UL97 on serine residues, phosphorylation seems important for UL44 nuclear entry but does not directly affect its role in replication. Post-translationally, sumoylated. Sumoylation on Lys-410 increases viral DNA replication.

It localises to the virion. The protein resides in the host nucleus. In terms of biological role, accessory subunit of the DNA polymerase that plays an essential role in viral DNA replication and acts by increasing the processivity of polymerization. Forms dimers that binds to double-stranded DNA and UL54 specifically to stimulates long chain DNA synthesis efficiently. Plays an important role in maintaining the structure of viral replication compartments by interacting with host nucleolin/NUC. In addition, suppresses innate immune responses through effects on host IRF3 and NF-kappa-B. Mechanistically, interfere with the binding of IRF3 and the p65 NF-kappa-B subunit to the promoters of antiviral genes, thereby inhibiting the expression of these genes. This is DNA polymerase processivity factor (UL44) from Homo sapiens (Human).